The following is a 294-amino-acid chain: MTVDVKKVINHKIKPIEYNLTRKDVALYAISLGCGKKHLKFVYEGSDNFSALPTLGVIFPGQMIVDVISEGIDGIEFDPMMLLHGEQELEILNEIPVEGVFVTESKITNLYDKGKGALLILQCITSEKSSGKPIFKNIFSFFIRGIGGFGGDRGPNEKPIQIPKDRAPDAISKQATSEDQAVIYRLAGGDLNPLHIDPEMSKIGGFEVPILHGLCTYGIASRGVLEHFCDNDPSRLKSIKTRFTKHVYPGETIETEMWKINPTTILFQSKTNRDGSYVLSSGVAIIEPIKKGSL.

Residues 84-85 (HG), Lys113, 190-195 (DLNPLH), Gly213, and Phe243 each bind (3R)-3-hydroxydecanoyl-CoA. The MaoC-like domain maps to 165 to 269 (DRAPDAISKQ…INPTTILFQS (105 aa)). Positions 292-294 (GSL) match the Microbody targeting signal motif.

This sequence belongs to the short-chain dehydrogenases/reductases (SDR) family.

Its subcellular location is the peroxisome. It catalyses the reaction a (3R)-3-hydroxyacyl-CoA = a (2E)-enoyl-CoA + H2O. This Dictyostelium discoideum (Social amoeba) protein is Probable enoyl-CoA hydratase 2 (mfeB).